The following is an 874-amino-acid chain: Leucine--tRNA ligase (874 aa).

The short motif at 43–53 is the 'HIGH' region element; sequence PYPSGRIHIGH. Positions 614 to 634 are disordered; the sequence is LDDGSPVTVGPPEKMSKSKKN. Residues 627-631 carry the 'KMSKS' region motif; sequence KMSKS. Residue lysine 630 participates in ATP binding.

It belongs to the class-I aminoacyl-tRNA synthetase family.

The protein localises to the cytoplasm. It carries out the reaction tRNA(Leu) + L-leucine + ATP = L-leucyl-tRNA(Leu) + AMP + diphosphate. The protein is Leucine--tRNA ligase of Azorhizobium caulinodans (strain ATCC 43989 / DSM 5975 / JCM 20966 / LMG 6465 / NBRC 14845 / NCIMB 13405 / ORS 571).